Here is a 297-residue protein sequence, read N- to C-terminus: Methionyl-tRNA formyltransferase (297 aa).

The disordered stretch occupies residues 31-52 (QPPRAAGRGQKPRPSPVHRAAE). Position 108-111 (108-111 (SLLP)) interacts with (6S)-5,6,7,8-tetrahydrofolate.

It belongs to the Fmt family.

The catalysed reaction is L-methionyl-tRNA(fMet) + (6R)-10-formyltetrahydrofolate = N-formyl-L-methionyl-tRNA(fMet) + (6S)-5,6,7,8-tetrahydrofolate + H(+). Its function is as follows. Attaches a formyl group to the free amino group of methionyl-tRNA(fMet). The formyl group appears to play a dual role in the initiator identity of N-formylmethionyl-tRNA by promoting its recognition by IF2 and preventing the misappropriation of this tRNA by the elongation apparatus. This is Methionyl-tRNA formyltransferase from Paracoccus denitrificans (strain Pd 1222).